The primary structure comprises 270 residues: Phosphatidylglycerol--prolipoprotein diacylglyceryl transferase (270 aa).

4 helical membrane-spanning segments follow: residues 19-39 (FPVYWYGIIIGTGVLLGLWLA), 56-76 (LVLIAVPIAILFARMYYVIFE), 92-112 (QGGLAIHGGLIGAVITGILFA), and 116-136 (GVSFWKLADIAAPSILLGQAI). Arg-138 contacts a 1,2-diacyl-sn-glycero-3-phospho-(1'-sn-glycerol). 3 consecutive transmembrane segments (helical) span residues 178–198 (HPTFLYESLWNFAGVILLLAL), 206–226 (GELFFTYLIWYSIGRFFVEGL), and 236–256 (LRIAQVMSIGLVVISIIFIIV).

This sequence belongs to the Lgt family.

It localises to the cell membrane. The catalysed reaction is L-cysteinyl-[prolipoprotein] + a 1,2-diacyl-sn-glycero-3-phospho-(1'-sn-glycerol) = an S-1,2-diacyl-sn-glyceryl-L-cysteinyl-[prolipoprotein] + sn-glycerol 1-phosphate + H(+). It functions in the pathway protein modification; lipoprotein biosynthesis (diacylglyceryl transfer). In terms of biological role, catalyzes the transfer of the diacylglyceryl group from phosphatidylglycerol to the sulfhydryl group of the N-terminal cysteine of a prolipoprotein, the first step in the formation of mature lipoproteins. The polypeptide is Phosphatidylglycerol--prolipoprotein diacylglyceryl transferase (Bacillus thuringiensis subsp. konkukian (strain 97-27)).